The sequence spans 424 residues: CinA-like protein (424 aa).

This sequence belongs to the CinA family.

In Syntrophobacter fumaroxidans (strain DSM 10017 / MPOB), this protein is CinA-like protein.